Reading from the N-terminus, the 119-residue chain is Large ribosomal subunit protein uL22 (119 aa).

This sequence belongs to the universal ribosomal protein uL22 family. As to quaternary structure, part of the 50S ribosomal subunit.

Functionally, this protein binds specifically to 23S rRNA; its binding is stimulated by other ribosomal proteins, e.g. L4, L17, and L20. It is important during the early stages of 50S assembly. It makes multiple contacts with different domains of the 23S rRNA in the assembled 50S subunit and ribosome. In terms of biological role, the globular domain of the protein is located near the polypeptide exit tunnel on the outside of the subunit, while an extended beta-hairpin is found that lines the wall of the exit tunnel in the center of the 70S ribosome. This Rickettsia rickettsii (strain Iowa) protein is Large ribosomal subunit protein uL22.